A 259-amino-acid polypeptide reads, in one-letter code: Small ribosomal subunit protein mS23 (259 aa).

It belongs to the mitochondrion-specific ribosomal protein mS23 family. Component of the mitochondrial small ribosomal subunit.

Its subcellular location is the mitochondrion. The chain is Small ribosomal subunit protein mS23 (RSM25) from Pyricularia oryzae (strain 70-15 / ATCC MYA-4617 / FGSC 8958) (Rice blast fungus).